A 163-amino-acid polypeptide reads, in one-letter code: Cytosolic iron-sulfur assembly component 2B (163 aa).

This sequence belongs to the MIP18 family.

It localises to the nucleus. It is found in the cytoplasm. The protein resides in the cytoskeleton. The protein localises to the spindle. Its function is as follows. Component of the cytosolic iron-sulfur (Fe/S) protein assembly machinery. Required for the maturation of extramitochondrial Fe/S proteins. May play a role in chromosome segregation through establishment of sister chromatid cohesion. The protein is Cytosolic iron-sulfur assembly component 2B of Dictyostelium discoideum (Social amoeba).